A 1052-amino-acid polypeptide reads, in one-letter code: Isoleucine--tRNA ligase (1052 aa).

A 'HIGH' region motif is present at residues 58–68 (PFANGLPHYGH). The short motif at 627-631 (KMSKS) is the 'KMSKS' region element. Residue lysine 630 participates in ATP binding.

The protein belongs to the class-I aminoacyl-tRNA synthetase family. IleS type 2 subfamily. Monomer. Requires Zn(2+) as cofactor.

It localises to the cytoplasm. It catalyses the reaction tRNA(Ile) + L-isoleucine + ATP = L-isoleucyl-tRNA(Ile) + AMP + diphosphate. Functionally, catalyzes the attachment of isoleucine to tRNA(Ile). As IleRS can inadvertently accommodate and process structurally similar amino acids such as valine, to avoid such errors it has two additional distinct tRNA(Ile)-dependent editing activities. One activity is designated as 'pretransfer' editing and involves the hydrolysis of activated Val-AMP. The other activity is designated 'posttransfer' editing and involves deacylation of mischarged Val-tRNA(Ile). This chain is Isoleucine--tRNA ligase, found in Corynebacterium diphtheriae (strain ATCC 700971 / NCTC 13129 / Biotype gravis).